The chain runs to 138 residues: NADH dehydrogenase [ubiquinone] iron-sulfur protein 2, mitochondrial (138 aa).

The protein belongs to the complex I 49 kDa subunit family. As to quaternary structure, core subunit of respiratory chain NADH dehydrogenase (Complex I) which is composed of 45 different subunits. Component of the iron-sulfur (IP) fragment of the enzyme. Interacts with NDUFAF3. Interacts with NDUFAF7. Interacts with CERS2. [4Fe-4S] cluster is required as a cofactor. Dimethylation at Arg-118 by NDUFAF7 takes place after NDUFS2 assembles into the complex I, leading to stabilize the early intermediate complex.

The protein resides in the mitochondrion inner membrane. The enzyme catalyses a ubiquinone + NADH + 5 H(+)(in) = a ubiquinol + NAD(+) + 4 H(+)(out). Core subunit of the mitochondrial membrane respiratory chain NADH dehydrogenase (Complex I) which catalyzes electron transfer from NADH through the respiratory chain, using ubiquinone as an electron acceptor. Essential for the catalytic activity and assembly of complex I. Redox-sensitive, critical component of the oxygen-sensing pathway in the pulmonary vasculature which plays a key role in acute pulmonary oxygen-sensing and hypoxic pulmonary vasoconstriction. Plays an important role in carotid body sensing of hypoxia. Essential for glia-like neural stem and progenitor cell proliferation, differentiation and subsequent oligodendrocyte or neuronal maturation. The protein is NADH dehydrogenase [ubiquinone] iron-sulfur protein 2, mitochondrial of Mesocricetus auratus (Golden hamster).